Here is a 409-residue protein sequence, read N- to C-terminus: Ingression protein 1 (409 aa).

One can recognise a C2 domain in the interval 1-114 (MSEEVWNGNQ…DPKEGYCTWY (114 aa)). The disordered stretch occupies residues 300 to 409 (LSYDEDDDDD…TRKRPPPRLS (110 aa)). Residues 302–313 (YDEDDDDDDEND) show a composition bias toward acidic residues. The segment covering 315 to 328 (FYSSSHRVSHNYNQ) has biased composition (polar residues). The span at 360-377 (LDSSSPNSHPHPSGLNSP) shows a compositional bias: low complexity. The segment covering 384-399 (TTSNSNFNSRKNSMSP) has biased composition (polar residues). A Phosphoserine modification is found at Ser-392. Residues 400 to 409 (TRKRPPPRLS) show a composition bias toward basic residues.

This sequence belongs to the INN1/fic1 family. Interacts with CYK2, CYK3 and IQG1.

It is found in the bud neck. In terms of biological role, required for the ingression of the plasma membrane into the bud neck at the end of cytokinesis, leading to the separation of the mother and daughter cells. Stimulates the synthesis of the primary septum (PS) by CHS2. The polypeptide is Ingression protein 1 (INN1) (Saccharomyces cerevisiae (strain ATCC 204508 / S288c) (Baker's yeast)).